An 847-amino-acid polypeptide reads, in one-letter code: DNA gyrase subunit A (847 aa).

A Topo IIA-type catalytic domain is found at 34 to 533 (LPDVRDGLKP…NYSDINTSDL (500 aa)). The active-site O-(5'-phospho-DNA)-tyrosine intermediate is tyrosine 122. Residues 560–566 (QKRGGKG) carry the GyrA-box motif.

Belongs to the type II topoisomerase GyrA/ParC subunit family. As to quaternary structure, heterotetramer, composed of two GyrA and two GyrB chains. In the heterotetramer, GyrA contains the active site tyrosine that forms a transient covalent intermediate with DNA, while GyrB binds cofactors and catalyzes ATP hydrolysis.

Its subcellular location is the cytoplasm. It carries out the reaction ATP-dependent breakage, passage and rejoining of double-stranded DNA.. In terms of biological role, a type II topoisomerase that negatively supercoils closed circular double-stranded (ds) DNA in an ATP-dependent manner to modulate DNA topology and maintain chromosomes in an underwound state. Negative supercoiling favors strand separation, and DNA replication, transcription, recombination and repair, all of which involve strand separation. Also able to catalyze the interconversion of other topological isomers of dsDNA rings, including catenanes and knotted rings. Type II topoisomerases break and join 2 DNA strands simultaneously in an ATP-dependent manner. This chain is DNA gyrase subunit A, found in Buchnera aphidicola subsp. Baizongia pistaciae (strain Bp).